The primary structure comprises 215 residues: NAD(P)H-hydrate epimerase (215 aa).

The YjeF N-terminal domain occupies 8 to 212; that stretch reads MYNIENKGHD…KIGIPPEAEE (205 aa). 57 to 61 is a (6S)-NADPHX binding site; the sequence is NNGGD. The K(+) site is built by Asn58 and Asp124. (6S)-NADPHX is bound by residues 128-134, Tyr139, and Asp157; that span reads GTGISGE. Ser160 contributes to the K(+) binding site.

This sequence belongs to the NnrE/AIBP family. K(+) is required as a cofactor.

The catalysed reaction is (6R)-NADHX = (6S)-NADHX. It carries out the reaction (6R)-NADPHX = (6S)-NADPHX. Functionally, catalyzes the epimerization of the S- and R-forms of NAD(P)HX, a damaged form of NAD(P)H that is a result of enzymatic or heat-dependent hydration. This is a prerequisite for the S-specific NAD(P)H-hydrate dehydratase to allow the repair of both epimers of NAD(P)HX. The protein is NAD(P)H-hydrate epimerase of Nitrosopumilus maritimus (strain SCM1).